Consider the following 63-residue polypeptide: UPF0337 protein SERP0494 (63 aa).

The tract at residues 1–46 (MAEDKFEQAKGNIKETVGNATDNKELEKDGKGDKASGKAKEAVENV) is disordered. Residues 22 to 46 (DNKELEKDGKGDKASGKAKEAVENV) show a composition bias toward basic and acidic residues.

This sequence belongs to the UPF0337 (CsbD) family.

The chain is UPF0337 protein SERP0494 from Staphylococcus epidermidis (strain ATCC 35984 / DSM 28319 / BCRC 17069 / CCUG 31568 / BM 3577 / RP62A).